The primary structure comprises 266 residues: Undecaprenyl-diphosphatase (266 aa).

A run of 8 helical transmembrane segments spans residues I4 to S24, L39 to Y59, L88 to I108, L114 to I134, I147 to S167, S186 to Y206, I214 to F234, and S246 to V266.

Belongs to the UppP family.

The protein localises to the cell inner membrane. The catalysed reaction is di-trans,octa-cis-undecaprenyl diphosphate + H2O = di-trans,octa-cis-undecaprenyl phosphate + phosphate + H(+). Its function is as follows. Catalyzes the dephosphorylation of undecaprenyl diphosphate (UPP). Confers resistance to bacitracin. In Borrelia recurrentis (strain A1), this protein is Undecaprenyl-diphosphatase.